Consider the following 109-residue polypeptide: Phycoerythrin alpha-1 subunit (109 aa).

(2R,3E)-phycocyanobilin contacts are provided by valine 6, alanine 16, phenylalanine 17, proline 20, aspartate 27, alanine 28, and alanine 39.

This sequence belongs to the phycoerythrin family. In terms of assembly, heterotetramer of 2 identical alpha chains and 2 identical beta chains which form 2 alpha-beta heterodimers within the heterotetramer. The two alpha-beta heterodimers are rotated to an open configuration in contrast to the closed configuration found in other cryptophyte species due to the insertion of a single amino acid, Asp-65, in a conserved region of the alpha chain. In the open form, the central chromophores are not in physical contact but are separated by a water-filled channel. In terms of processing, contains three phycocyanobilin chromophores with binding mediated by both the alpha and beta subunits.

It is found in the plastid. The protein localises to the chloroplast thylakoid membrane. In terms of biological role, light-harvesting photosynthetic tetrapyrrole chromophore-protein from the phycobiliprotein complex. This chain is Phycoerythrin alpha-1 subunit, found in Hemiselmis virescens.